Consider the following 176-residue polypeptide: Peptidyl-prolyl cis-trans isomerase cyp5 (176 aa).

A PPIase cyclophilin-type domain is found at 10–173; it reads FFDVAVNGKP…AKVEIVDCGE (164 aa).

It belongs to the cyclophilin-type PPIase family.

It catalyses the reaction [protein]-peptidylproline (omega=180) = [protein]-peptidylproline (omega=0). Its function is as follows. PPIases accelerate the folding of proteins. It catalyzes the cis-trans isomerization of proline imidic peptide bonds in oligopeptides. In Rhizopus delemar (strain RA 99-880 / ATCC MYA-4621 / FGSC 9543 / NRRL 43880) (Mucormycosis agent), this protein is Peptidyl-prolyl cis-trans isomerase cyp5 (cyp5).